The following is a 382-amino-acid chain: Gap junction alpha-1 protein (382 aa).

The Cytoplasmic segment spans residues 2-23; that stretch reads GGWSALAKLLGKVQAYSPAGGK. At serine 5 the chain carries Phosphoserine. Residues 24-44 traverse the membrane as a helical segment; the sequence is VWLSVLFIFRILLLGTAVESA. Over 45–76 the chain is Extracellular; the sequence is WGDEQSAFRCNTQQPGCENVCYDKSFPISHVR. Cystine bridges form between cysteine 54–cysteine 192 and cysteine 187–cysteine 198. A helical membrane pass occupies residues 77–97; it reads FWVLQIIFVSVPTLLYLAHVF. At 98–155 the chain is on the cytoplasmic side; it reads YVMRKEEKLNKKEEELKVAQTDGANVDMHLKQIEIKKFKYGIEEHGKVKMRGGLLRTY. Lysine 144 participates in a covalent cross-link: Glycyl lysine isopeptide (Lys-Gly) (interchain with G-Cter in SUMO). A helical transmembrane segment spans residues 156-176; the sequence is IISILFKSVFEVAFLLIQWYI. Residues 177 to 207 lie on the Extracellular side of the membrane; that stretch reads YGFSLSAVYTCKREPCPHQVDCFLSRPTEKT. Residues 208-228 traverse the membrane as a helical segment; it reads IFIIFMLVVSLVSLALNIIEL. Residues 229–382 are Cytoplasmic-facing; sequence FYVFFKGVKD…SRPRPDDLEI (154 aa). Residue lysine 237 forms a Glycyl lysine isopeptide (Lys-Gly) (interchain with G-Cter in SUMO) linkage. The interval 244–382 is interaction with NOV; the sequence is SDPYHATTGP…SRPRPDDLEI (139 aa). A Phosphotyrosine modification is found at tyrosine 247. A phosphoserine mark is found at serine 255, serine 257, and serine 262. Residues 264 to 382 form an interaction with UBQLN4 region; sequence EYAYFNGCSS…SRPRPDDLEI (119 aa). S-nitrosocysteine is present on cysteine 271. Threonine 275 is subject to Phosphothreonine. Phosphoserine occurs at positions 306 and 314. The segment covering 317 to 332 has biased composition (polar residues); that stretch reads QNRMGQAGSTISNSHA. The interval 317–382 is disordered; that stretch reads QNRMGQAGST…SRPRPDDLEI (66 aa). Serine 325 carries the phosphoserine; by CK1 modification. The residue at position 326 (threonine 326) is a Phosphothreonine. Residues serine 328 and serine 330 each carry the phosphoserine; by CK1 modification. Serine 344 and serine 365 each carry phosphoserine. Residues 362-374 are compositionally biased toward low complexity; sequence RPSSRASSRASSR. Serine 368 is subject to Phosphoserine; by PKC/PRKCG and PKC/PRKCD. Serine 369 and serine 373 each carry phosphoserine.

The protein belongs to the connexin family. Alpha-type (group II) subfamily. A connexon is composed of a hexamer of connexins. Interacts with SGSM3. Interacts with RIC1/CIP150. Interacts with CNST and CSNK1D. Interacts (via C-terminus) with TJP1. Interacts (via C-terminus) with SRC (via SH3 domain). Interacts (not ubiquitinated) with UBQLN4 (via UBA domain). Interacts with NOV. Interacts with TMEM65. Interacts with ANK3/ANKG and PKP2. Phosphorylation at Ser-325, Ser-328 and Ser-330 by CK1 modulates gap junction assembly. Phosphorylated at Ser-368 by PRKCG; phosphorylation induces disassembly of gap junction plaques and inhibition of gap junction activity. Phosphorylation at Ser-368 by PRKCD triggers its internalization into small vesicles leading to proteasome-mediated degradation. In terms of processing, sumoylated with SUMO1, SUMO2 and SUMO3, which may regulate the level of functional Cx43 gap junctions at the plasma membrane. May be desumoylated by SENP1 or SENP2. Post-translationally, S-nitrosylation at Cys-271 is enriched at the muscle endothelial gap junction in arteries, it augments channel permeability and may regulate of smooth muscle cell to endothelial cell communication. Acetylated in the developing cortex; leading to delocalization from the cell membrane.

It is found in the cell membrane. The protein localises to the cell junction. Its subcellular location is the gap junction. It localises to the endoplasmic reticulum. Its function is as follows. Gap junction protein that acts as a regulator of bladder capacity. A gap junction consists of a cluster of closely packed pairs of transmembrane channels, the connexons, through which materials of low MW diffuse from one cell to a neighboring cell. May play a critical role in the physiology of hearing by participating in the recycling of potassium to the cochlear endolymph. Negative regulator of bladder functional capacity: acts by enhancing intercellular electrical and chemical transmission, thus sensitizing bladder muscles to cholinergic neural stimuli and causing them to contract. May play a role in cell growth inhibition through the regulation of NOV expression and localization. Plays an essential role in gap junction communication in the ventricles. This Canis lupus familiaris (Dog) protein is Gap junction alpha-1 protein (GJA1).